Consider the following 238-residue polypeptide: Sugar fermentation stimulation protein homolog (238 aa).

Belongs to the SfsA family.

This Vibrio vulnificus (strain YJ016) protein is Sugar fermentation stimulation protein homolog.